The chain runs to 196 residues: Na(+)-translocating ferredoxin:NAD(+) oxidoreductase complex subunit E (196 aa).

Helical transmembrane passes span 38-58, 68-88, 92-112, 127-147, and 169-189; these read MGMGLATMLVLIGSNVAISAL, IPAFVVVIASFVTIVGMLMKA, ALDAALGIFIPLIVVNCIILA, FADAVGMGLGFTLALTILGSI, and VLLMILPPGAFLTLGLLIGLI.

Belongs to the NqrDE/RnfAE family. In terms of assembly, the complex is composed of six subunits: RnfA, RnfB, RnfC, RnfD, RnfE and RnfG.

It localises to the cell membrane. The catalysed reaction is 2 reduced [2Fe-2S]-[ferredoxin] + Na(+)(in) + NAD(+) + H(+) = 2 oxidized [2Fe-2S]-[ferredoxin] + Na(+)(out) + NADH. Part of a membrane-bound complex that couples electron transfer with translocation of ions across the membrane. Couples electron transfer from reduced ferredoxin to NAD(+) with electrogenic movement of Na(+) out of the cell. Involved in caffeate respiration. The protein is Na(+)-translocating ferredoxin:NAD(+) oxidoreductase complex subunit E of Acetobacterium woodii (strain ATCC 29683 / DSM 1030 / JCM 2381 / KCTC 1655 / WB1).